We begin with the raw amino-acid sequence, 412 residues long: Putative competence-damage inducible protein (412 aa).

The protein belongs to the CinA family.

This chain is Putative competence-damage inducible protein, found in Clostridium perfringens (strain ATCC 13124 / DSM 756 / JCM 1290 / NCIMB 6125 / NCTC 8237 / Type A).